A 487-amino-acid chain; its full sequence is Polyamine oxidase 4 (487 aa).

E53, R61, V242, and E429 together coordinate FAD. Residues 485–487 (CRT) carry the Microbody targeting signal motif.

It belongs to the flavin monoamine oxidase family. Requires FAD as cofactor. Widely expressed.

It is found in the peroxisome. The enzyme catalyses spermine + O2 + H2O = 3-aminopropanal + spermidine + H2O2. The catalysed reaction is norspermine + O2 + H2O = norspermidine + 3-aminopropanal + H2O2. It catalyses the reaction thermospermine + O2 + H2O = 3-aminopropanal + spermidine + H2O2. Its pathway is amine and polyamine degradation; spermine degradation. In terms of biological role, flavoenzyme involved in polyamine back-conversion. Catalyzes the oxidation of the secondary amino group of polyamines, such as spermine. Substrate preference is spermine &gt; thermospermine &gt; norspermine. No activity detected when putrescine, spermidine or N(1)-acetylspermidine are used as substrates. Plays an important role in the regulation of polyamine intracellular concentration. The protein is Polyamine oxidase 4 of Oryza sativa subsp. japonica (Rice).